The sequence spans 403 residues: Aminomethyltransferase, mitochondrial (403 aa).

The transit peptide at 1–28 directs the protein to the mitochondrion; it reads MQRAVSVVARLGFRLQAFPPALCRPLSC. The substrate site is built by E232, R261, and Y399.

This sequence belongs to the GcvT family. As to quaternary structure, the glycine cleavage system is composed of four proteins: P, T, L and H.

The protein resides in the mitochondrion. It catalyses the reaction N(6)-[(R)-S(8)-aminomethyldihydrolipoyl]-L-lysyl-[protein] + (6S)-5,6,7,8-tetrahydrofolate = N(6)-[(R)-dihydrolipoyl]-L-lysyl-[protein] + (6R)-5,10-methylene-5,6,7,8-tetrahydrofolate + NH4(+). Its function is as follows. The glycine cleavage system catalyzes the degradation of glycine. In Homo sapiens (Human), this protein is Aminomethyltransferase, mitochondrial.